A 182-amino-acid chain; its full sequence is NADH-dependent FAD reductase (182 aa).

Aspartate 16 contributes to the NAD(+) binding site. FAD-binding positions include 47 to 48 (NS), 62 to 64 (CVG), and histidine 98. Histidine 143 lines the NAD(+) pocket.

Belongs to the non-flavoprotein flavin reductase family. Homodimer.

It catalyses the reaction FADH2 + NAD(+) = FAD + NADH + 2 H(+). The protein operates within antibiotic biosynthesis. Its activity is regulated as follows. The SgcE6-SgcC hydroxylation activity decreases in the presence of excess FAD. Reductase component of a two-component system involved in the biosynthesis of the enediyne antitumor antibiotic C-1027. SgcE6 provides the FADH(2) required by both the halogenase SgcC3 and the monooxygenase SgcC through free diffusion. Accepts only NADH and FAD as substrates. The chain is NADH-dependent FAD reductase from Streptomyces globisporus.